The chain runs to 133 residues: Small ribosomal subunit protein uS9 (133 aa).

The span at 98–113 shows a compositional bias: basic and acidic residues; the sequence is RKPLKTEGHLSRDPRA. The tract at residues 98–133 is disordered; it reads RKPLKTEGHLSRDPRAKERRKYGLKKARKAPQFSKR. Basic residues predominate over residues 114–133; that stretch reads KERRKYGLKKARKAPQFSKR.

It belongs to the universal ribosomal protein uS9 family.

The sequence is that of Small ribosomal subunit protein uS9 from Synechococcus sp. (strain CC9902).